Reading from the N-terminus, the 215-residue chain is Cytochrome b6 (215 aa).

The chain crosses the membrane as a helical span at residues 32 to 52; that stretch reads IFYCLGGITFTCFIIQVATGF. Cysteine 35 provides a ligand contact to heme c. Heme b contacts are provided by histidine 86 and histidine 100. Transmembrane regions (helical) follow at residues 90–110, 116–136, and 186–206; these read ASMMVLMMILHVCRVYLTGGF, LTWVTGIILAILTVSFGVTGY, and LHTFVLPLLTATFMLGHFLMI. The heme b site is built by histidine 187 and histidine 202.

The protein belongs to the cytochrome b family. PetB subfamily. The 4 large subunits of the cytochrome b6-f complex are cytochrome b6, subunit IV (17 kDa polypeptide, PetD), cytochrome f and the Rieske protein, while the 4 small subunits are PetG, PetL, PetM and PetN. The complex functions as a dimer. Heme b serves as cofactor. Requires heme c as cofactor.

The protein localises to the plastid. It is found in the chloroplast thylakoid membrane. In terms of biological role, component of the cytochrome b6-f complex, which mediates electron transfer between photosystem II (PSII) and photosystem I (PSI), cyclic electron flow around PSI, and state transitions. The sequence is that of Cytochrome b6 from Euglena gracilis.